The chain runs to 549 residues: Hydroxylamine reductase (549 aa).

Positions 5, 8, 17, and 23 each coordinate [4Fe-4S] cluster. H244, E268, C312, C403, C431, C456, E491, and K493 together coordinate hybrid [4Fe-2O-2S] cluster. A Cysteine persulfide modification is found at C403.

This sequence belongs to the HCP family. It depends on [4Fe-4S] cluster as a cofactor. The cofactor is hybrid [4Fe-2O-2S] cluster.

The protein resides in the cytoplasm. The catalysed reaction is A + NH4(+) + H2O = hydroxylamine + AH2 + H(+). Its function is as follows. Catalyzes the reduction of hydroxylamine to form NH(3) and H(2)O. The protein is Hydroxylamine reductase of Caldanaerobacter subterraneus subsp. tengcongensis (strain DSM 15242 / JCM 11007 / NBRC 100824 / MB4) (Thermoanaerobacter tengcongensis).